Consider the following 391-residue polypeptide: Cathepsin E (391 aa).

The N-terminal stretch at 1–19 is a signal peptide; that stretch reads MKTFLLLLLVLLELGQAPG. Residues 20 to 53 constitute a propeptide, activation peptide; the sequence is ALHRVPLSRRESLRKKLRAQGQLTELWKSQNLNM. Positions 74 to 387 constitute a Peptidase A1 domain; that stretch reads YFGTISIGSP…DRGNNRVGLA (314 aa). Asn86 is a glycosylation site (N-linked (GlcNAc...) asparagine). Asp92 is a catalytic residue. 2 cysteine pairs are disulfide-bonded: Cys105–Cys110 and Cys267–Cys271. The active site involves Asp276. Cys309 and Cys346 are oxidised to a cystine.

Belongs to the peptidase A1 family. Homodimer; disulfide-linked. Glycosylated. The nature of the carbohydrate chain varies between cell types. As to expression, expressed abundantly in the surface and foveolar epithelial cells of the fundic and pyloric stomach mucosa, and at very low levels in the spleen.

Its subcellular location is the endosome. It catalyses the reaction Similar to cathepsin D, but slightly broader specificity.. Its function is as follows. May have a role in immune function. Probably involved in the processing of antigenic peptides during MHC class II-mediated antigen presentation. May play a role in activation-induced lymphocyte depletion in the thymus, and in neuronal degeneration and glial cell activation in the brain. The chain is Cathepsin E (CTSE) from Cavia porcellus (Guinea pig).